Consider the following 2357-residue polypeptide: Myosin-I heavy chain (2357 aa).

The Myosin motor domain maps to glutamine 13 to lysine 688. ATP is bound at residue glycine 106–threonine 113. Positions tyrosine 579–asparagine 586 are actin-binding. The 30-residue stretch at leucine 691–isoleucine 720 folds into the IQ domain. Residues lysine 787–aspartate 891 adopt a coiled-coil conformation. Positions lysine 787 to proline 1076 are binding to talin A. Disordered stretches follow at residues isoleucine 797 to leucine 852 and alanine 974 to proline 1112. Composition is skewed to low complexity over residues asparagine 1003–serine 1025 and threonine 1078–asparagine 1106. Positions tyrosine 1155 to lysine 1313 constitute a MyTH4 1 domain. One can recognise an FERM 1 domain in the interval isoleucine 1318–alanine 1620. The region spanning asparagine 1618–serine 1678 is the SH3 domain. The interval valine 1686 to alanine 1849 is disordered. Positions threonine 1706 to serine 1733 are enriched in pro residues. Low complexity-rich tracts occupy residues valine 1734 to leucine 1746 and serine 1755 to methionine 1770. Polar residues predominate over residues phenylalanine 1817–threonine 1828. The 158-residue stretch at phenylalanine 1894–arginine 2051 folds into the MyTH4 2 domain. Residues serine 2060 to glutamine 2357 form the FERM 2 domain.

The protein belongs to the TRAFAC class myosin-kinesin ATPase superfamily. Myosin family. Monomer. Interacts with talA.

The protein localises to the cytoplasm. Functionally, myosins are actin-based motor molecules with ATPase activity. Involved in the early steps of phagocytosis and adhesion. The polypeptide is Myosin-I heavy chain (myoI) (Dictyostelium discoideum (Social amoeba)).